The sequence spans 369 residues: 4-hydroxy-3-methylbut-2-en-1-yl diphosphate synthase (flavodoxin) (369 aa).

Residues Cys-270, Cys-273, Cys-305, and Glu-312 each coordinate [4Fe-4S] cluster.

This sequence belongs to the IspG family. [4Fe-4S] cluster serves as cofactor.

The catalysed reaction is (2E)-4-hydroxy-3-methylbut-2-enyl diphosphate + oxidized [flavodoxin] + H2O + 2 H(+) = 2-C-methyl-D-erythritol 2,4-cyclic diphosphate + reduced [flavodoxin]. The protein operates within isoprenoid biosynthesis; isopentenyl diphosphate biosynthesis via DXP pathway; isopentenyl diphosphate from 1-deoxy-D-xylulose 5-phosphate: step 5/6. Functionally, converts 2C-methyl-D-erythritol 2,4-cyclodiphosphate (ME-2,4cPP) into 1-hydroxy-2-methyl-2-(E)-butenyl 4-diphosphate. The polypeptide is 4-hydroxy-3-methylbut-2-en-1-yl diphosphate synthase (flavodoxin) (Pseudomonas fluorescens (strain ATCC BAA-477 / NRRL B-23932 / Pf-5)).